Here is a 423-residue protein sequence, read N- to C-terminus: MKVLLIGSGGREHALAWKIAQSPLIDALYAAPGNPGIADHATLVSLDVEDHAAVIAFAKEKAIDFVVIGPEAPLVAGLADDLRAAGIATFGPSKAAAQLEGSKGFTKDLCARYDIPTGAYERFKAAEPAKDYVRAQGAPIVIKADGLAAGKGVTVAMTEAEALAAIDDCFDGAFGTAGTEVVVEAFLDGEEASFFCLSDGKTALALATAQDHKRVGDGDTGPNTGGMGAYSPAPVMTPAMVERTMKEIIEPTISGMAKDGNPFSGVFFAGLMITAKGPELIEYNVRFGDPECQVLMMRLKSDLLPILYATATGTLDKVQAEWRDDAALTVVLASKGYPGAYDKNTPIAHIPEASEEAKVFHAGTALKDGKLVATGGRVLNVTAFGRNVTEAQARAYALADKVEWENGFCRRDIGWQAIAREKA.

Residues 107-312 (KDLCARYDIP…LLPILYATAT (206 aa)) enclose the ATP-grasp domain. 133-193 (VRAQGAPIVI…EAFLDGEEAS (61 aa)) contributes to the ATP binding site. Residues Glu-282 and Asn-284 each contribute to the Mg(2+) site.

The protein belongs to the GARS family. It depends on Mg(2+) as a cofactor. Mn(2+) is required as a cofactor.

The enzyme catalyses 5-phospho-beta-D-ribosylamine + glycine + ATP = N(1)-(5-phospho-beta-D-ribosyl)glycinamide + ADP + phosphate + H(+). It participates in purine metabolism; IMP biosynthesis via de novo pathway; N(1)-(5-phospho-D-ribosyl)glycinamide from 5-phospho-alpha-D-ribose 1-diphosphate: step 2/2. In Agrobacterium fabrum (strain C58 / ATCC 33970) (Agrobacterium tumefaciens (strain C58)), this protein is Phosphoribosylamine--glycine ligase.